The primary structure comprises 47 residues: Large ribosomal subunit protein bL34 (47 aa).

It belongs to the bacterial ribosomal protein bL34 family.

This is Large ribosomal subunit protein bL34 from Corynebacterium jeikeium (strain K411).